A 176-amino-acid chain; its full sequence is Shikimate kinase (176 aa).

Residue 14–19 (GAGKST) coordinates ATP. S18 contacts Mg(2+). Positions 36, 60, and 83 each coordinate substrate. ATP is bound at residue R121. R140 is a substrate binding site.

It belongs to the shikimate kinase family. In terms of assembly, monomer. The cofactor is Mg(2+).

The protein resides in the cytoplasm. The catalysed reaction is shikimate + ATP = 3-phosphoshikimate + ADP + H(+). It functions in the pathway metabolic intermediate biosynthesis; chorismate biosynthesis; chorismate from D-erythrose 4-phosphate and phosphoenolpyruvate: step 5/7. In terms of biological role, catalyzes the specific phosphorylation of the 3-hydroxyl group of shikimic acid using ATP as a cosubstrate. The polypeptide is Shikimate kinase (Francisella philomiragia subsp. philomiragia (strain ATCC 25017 / CCUG 19701 / FSC 153 / O#319-036)).